Consider the following 732-residue polypeptide: uncharacterized protein (732 aa).

Positions 145-207 (ETLRDSVINP…RRRPEMASPH (63 aa)) are disordered. A compositionally biased stretch (basic and acidic residues) spans 170 to 179 (KGHETLERGS). A Reverse transcriptase domain is found at 176 to 524 (ERGSKALGPE…KKIPFLGYLI (349 aa)).

The protein resides in the mitochondrion. This is an uncharacterized protein from Marchantia polymorpha (Common liverwort).